Here is a 156-residue protein sequence, read N- to C-terminus: Small ribosomal subunit protein uS7 (156 aa).

This sequence belongs to the universal ribosomal protein uS7 family. In terms of assembly, part of the 30S ribosomal subunit. Contacts proteins S9 and S11.

In terms of biological role, one of the primary rRNA binding proteins, it binds directly to 16S rRNA where it nucleates assembly of the head domain of the 30S subunit. Is located at the subunit interface close to the decoding center, probably blocks exit of the E-site tRNA. This Pectobacterium carotovorum subsp. carotovorum (strain PC1) protein is Small ribosomal subunit protein uS7.